The primary structure comprises 592 residues: LPEKRINVGKKHLQTLRNLETRCHDSFQAFVVIDARSSSTRTNVFLAKTRSCPNRGRSIDPDSIRLIREGKRFTGLRVVLEEWLDTYAGKDWESRPVDARLLFQYVPQMHEGAKKPMQLLEEDTVAILDSQLNEKQKVQVKALGIPAMLCSTAGVRDFHEWYRDALFVLLRHLINNPSPAHGYKFFTNPFWTRPITGAEEGLFAFITLNHLSRRLGEDPARCMIDEYGVKQCRNDLAGVVEVGGASAQIVFPLQEGTVLPSSVRAVNLQRERLLPERYPSADVVSVSFMQLGMASSAGLFLKELCSNDEFLQGGICSNPCLFKGFQQSCSAGEVEVRPDGSASVNEDVRKNRLKPLATYCSVNNPEISFKVTNEMQCRENSIDPTKPLAERMKIENCSIIKGTGNFDKCVSQVESILVAPKLPLPANIEAASSGFESVDQVFRFASSTAPMIVTGGGMLAAINTLKDHRLLRSDFSGDVEELAEAAREFCSSEVIIRTDGPVIQLPNARGEQKLNSLNFDLCKTMALTVSLLRHMAAGENQPSFIKWEKSIAGPDGKPLADLGWQVGVILHHVLFTEEWGRNAYEAGYSHNL.

The Proton acceptor role is filled by Glu200.

It belongs to the GDA1/CD39 NTPase family.

It carries out the reaction a ribonucleoside 5'-triphosphate + H2O = a ribonucleoside 5'-diphosphate + phosphate + H(+). This chain is Putative nucleoside-triphosphatase (NTP4), found in Toxoplasma gondii.